We begin with the raw amino-acid sequence, 58 residues long: Protein YecU (58 aa).

The chain is Protein YecU from Escherichia coli (strain K12).